The primary structure comprises 276 residues: Putative pyruvate, phosphate dikinase regulatory protein (276 aa).

Residue 150–157 (GVSRTSKT) participates in ADP binding.

The protein belongs to the pyruvate, phosphate/water dikinase regulatory protein family. PDRP subfamily.

The enzyme catalyses N(tele)-phospho-L-histidyl/L-threonyl-[pyruvate, phosphate dikinase] + ADP = N(tele)-phospho-L-histidyl/O-phospho-L-threonyl-[pyruvate, phosphate dikinase] + AMP + H(+). The catalysed reaction is N(tele)-phospho-L-histidyl/O-phospho-L-threonyl-[pyruvate, phosphate dikinase] + phosphate + H(+) = N(tele)-phospho-L-histidyl/L-threonyl-[pyruvate, phosphate dikinase] + diphosphate. Bifunctional serine/threonine kinase and phosphorylase involved in the regulation of the pyruvate, phosphate dikinase (PPDK) by catalyzing its phosphorylation/dephosphorylation. In Lacticaseibacillus casei (strain BL23) (Lactobacillus casei), this protein is Putative pyruvate, phosphate dikinase regulatory protein.